The following is a 589-amino-acid chain: Zinc finger and BTB domain-containing protein 46 (589 aa).

The 69-residue stretch at cysteine 31 to serine 99 folds into the BTB domain. The tract at residues arginine 173–arginine 330 is disordered. Basic and acidic residues predominate over residues glycine 197 to glycine 207. Residue lysine 229 forms a Glycyl lysine isopeptide (Lys-Gly) (interchain with G-Cter in SUMO2) linkage. The residue at position 234 (serine 234) is a Phosphoserine. Over residues tryptophan 305–aspartate 325 the composition is skewed to polar residues. C2H2-type zinc fingers lie at residues phenylalanine 418–histidine 436 and tyrosine 446–histidine 468. The interval proline 512–serine 589 is disordered. The segment covering glutamate 546–aspartate 570 has biased composition (acidic residues).

In terms of processing, sumoylated. Desumoylation by DESI1 reverses transcriptional repression activity.

The protein localises to the nucleus. In terms of biological role, functions as a transcriptional repressor for PRDM1. The chain is Zinc finger and BTB domain-containing protein 46 (ZBTB46) from Homo sapiens (Human).